Here is a 328-residue protein sequence, read N- to C-terminus: uncharacterized protein (328 aa).

Residues 10–55 (KMGFGHAMLLKMGWKGKGLGVEEDGRTEIIVNKKKQDKVGVGASIS) form the G-patch domain. A disordered region spans residues 97–291 (EKITFKRTIK…KKSFSVSKTR (195 aa)). The segment covering 101 to 110 (FKRTIKKNSK) has biased composition (basic residues). The segment covering 116-126 (SDSDSDSDSES) has biased composition (acidic residues). Composition is skewed to low complexity over residues 141–158 (DSDS…SSSS) and 210–240 (SSSS…SSSE). Over residues 248-257 (KNKNKNKNKK) the composition is skewed to basic residues.

This is an uncharacterized protein from Dictyostelium discoideum (Social amoeba).